The following is a 456-amino-acid chain: Methionine aminopeptidase 2 (456 aa).

The span at M1–P11 shows a compositional bias: pro residues. The segment at M1 to R127 is disordered. Positions E31 to E45 are enriched in acidic residues. Over residues K66–K79 the composition is skewed to basic residues. Substrate is bound at residue H209. Positions 229, 240, and 309 each coordinate a divalent metal cation. H317 contributes to the substrate binding site. A divalent metal cation contacts are provided by E343 and E437.

Belongs to the peptidase M24A family. Methionine aminopeptidase eukaryotic type 2 subfamily. Co(2+) serves as cofactor. The cofactor is Zn(2+). Mn(2+) is required as a cofactor. Requires Fe(2+) as cofactor.

It is found in the cytoplasm. The enzyme catalyses Release of N-terminal amino acids, preferentially methionine, from peptides and arylamides.. Its function is as follows. Cotranslationally removes the N-terminal methionine from nascent proteins. The N-terminal methionine is often cleaved when the second residue in the primary sequence is small and uncharged (Met-Ala-, Cys, Gly, Pro, Ser, Thr, or Val). This chain is Methionine aminopeptidase 2, found in Puccinia graminis f. sp. tritici (strain CRL 75-36-700-3 / race SCCL) (Black stem rust fungus).